The following is a 330-amino-acid chain: tRNA U34 carboxymethyltransferase (330 aa).

Carboxy-S-adenosyl-L-methionine-binding positions include Lys91, Trp105, Lys110, Gly130, 152–154 (DPS), 181–182 (IE), Met196, Tyr200, and Arg315.

It belongs to the class I-like SAM-binding methyltransferase superfamily. CmoB family. In terms of assembly, homotetramer.

The catalysed reaction is carboxy-S-adenosyl-L-methionine + 5-hydroxyuridine(34) in tRNA = 5-carboxymethoxyuridine(34) in tRNA + S-adenosyl-L-homocysteine + H(+). Catalyzes carboxymethyl transfer from carboxy-S-adenosyl-L-methionine (Cx-SAM) to 5-hydroxyuridine (ho5U) to form 5-carboxymethoxyuridine (cmo5U) at position 34 in tRNAs. This chain is tRNA U34 carboxymethyltransferase, found in Shewanella denitrificans (strain OS217 / ATCC BAA-1090 / DSM 15013).